A 440-amino-acid chain; its full sequence is MGQIPRFLSWRNMLVLSLAINFSLILKILKGDRERGDSWDRTAYVSIWPVVSTTASESSSLSSASCNYSKIEEDDDRIINLKFGDPTVYERYWQENGEVTTMVIPGWQSLSYFSDENNLCWFLEPELAKEIVRVHKVVGNAVTQDRFIVVGTGSTQLYQAALYALSPHDDSGPINVVSATPYYSTYPLITDCLKSGLYRWGGDAKTYKEDGPYIELVTSPNNPDGFLRESVVNSTEGILIHDLAYYWPQYTPITSPADHDVMLFTASKSTGHAGIRIGWALVKDRETARKMIEYIELNTIGVSKDSQLRVAKVLKVVSDSCGNVTGKSFFDHSYDAMYERWKLLKQAAKDTKRFSVPDFVSQRCNFFGRVFEPQPAFAWFKCEEGIVDCEKFLREEKKILTKSGKYFGDELSNVRISMLDRDTNFNIFLHRITSSFNSTL.

The helical transmembrane segment at 7–26 (FLSWRNMLVLSLAINFSLIL) threads the bilayer. Pyridoxal 5'-phosphate is bound by residues Tyr112, 154 to 155 (ST), Asn222, 242 to 245 (DLAY), 265 to 268 (TASK), and Arg276. Lys268 is subject to N6-(pyridoxal phosphate)lysine.

Belongs to the alliinase family. Requires pyridoxal 5'-phosphate as cofactor. Expressed in roots, cotyledons and in the apical parts of hypocotyls. In roots, restricted to the provasculature of meristematic regions. Detected on the inner side of the apical hooks.

Its subcellular location is the membrane. The catalysed reaction is L-tryptophan + 2-oxoglutarate = indole-3-pyruvate + L-glutamate. The enzyme catalyses L-tryptophan + pyruvate = indole-3-pyruvate + L-alanine. It participates in plant hormone metabolism; auxin biosynthesis. Its activity is regulated as follows. Inhibited by L-kynurenine. Functionally, involved in auxin production. Both TAA1 and TAR2 are required for maintaining proper auxin levels in roots, while TAA1, TAR1 and TAR2 are required for proper embryo patterning. Involved in the maintenance of the root stem cell niches. The protein is Tryptophan aminotransferase-related protein 2 (TAR2) of Arabidopsis thaliana (Mouse-ear cress).